The chain runs to 104 residues: Inclusion membrane protein F (104 aa).

The next 2 membrane-spanning stretches (helical) occupy residues 39–59 (LVVALAALVLNGALCVLSLVA) and 70–90 (LAVLVATTLASFLCVAYVLFI).

It localises to the secreted. The protein resides in the host vacuole. It is found in the host pathogen-containing vacuole. The protein localises to the host pathogen-containing vacuole membrane. Functionally, inclusion membrane protein probably involved in early modification events of the chlamydial inclusion. This chain is Inclusion membrane protein F, found in Chlamydia trachomatis serovar L2 (strain ATCC VR-902B / DSM 19102 / 434/Bu).